The chain runs to 393 residues: Protein TsgA (393 aa).

12 helical membrane-spanning segments follow: residues 11–31 (WISFLSYALTGALVIVTGMVM), 51–71 (FLNAGILISIFLNAWLMEIVP), 78–98 (FGFLLMVLAVAGLMFSHSLAL), 101–121 (AAMFILGVVSGITMSIGTFLV), 134–154 (LLFTDSFFSMAGMIFPMIAAF), 162–182 (WYWVYACIGLVYVAIFILTFG), 206–226 (IGVLFLSVAALCYILGQLGFI), 245–265 (TLVSNFWMSYMVGMWAFSFIL), 273–293 (ILTVLAGLAAILMYVFNTGTP), 297–317 (AWSILALGFFSSAIYTTIITL), 332–352 (FVLTCGTIGTMLTFVVTGPIV), and 361–381 (LLTANGLYAVVFVMCFLLGFV).

It belongs to the major facilitator superfamily. TsgA family.

The protein resides in the cell inner membrane. The sequence is that of Protein TsgA from Escherichia coli O139:H28 (strain E24377A / ETEC).